We begin with the raw amino-acid sequence, 393 residues long: Autophagy-related protein 18c (393 aa).

WD repeat units lie at residues Lys27–Arg65, Asp70–Glu114, Ala199–Glu239, and Val244–Asp283.

The protein belongs to the WD repeat PROPPIN family. Component of the PI(3,5)P2 regulatory complex at least composed of ATG18, SAC/FIG4, FAB1 and VAC14. In terms of tissue distribution, expressed in roots, stems, flowers and leaves.

The protein localises to the preautophagosomal structure membrane. It localises to the vacuole membrane. The PI(3,5)P2 regulatory complex regulates both the synthesis and turnover of phosphatidylinositol 3,5-bisphosphate (PtdIns(3,5)P2). Required for autophagy. This is Autophagy-related protein 18c (ATG18C) from Arabidopsis thaliana (Mouse-ear cress).